The following is a 187-amino-acid chain: UPF0301 protein YqgE (187 aa).

The protein belongs to the UPF0301 (AlgH) family.

The polypeptide is UPF0301 protein YqgE (Escherichia fergusonii (strain ATCC 35469 / DSM 13698 / CCUG 18766 / IAM 14443 / JCM 21226 / LMG 7866 / NBRC 102419 / NCTC 12128 / CDC 0568-73)).